The sequence spans 848 residues: Nuclear cap-binding protein subunit 1 (848 aa).

The 221-residue stretch at Leu-8 to Ala-228 folds into the MIF4G domain. The disordered stretch occupies residues Glu-767–Ser-786.

The protein belongs to the NCBP1 family. As to quaternary structure, component of the nuclear cap-binding complex (CBC), a heterodimer composed of ABH1/CBP80 and CBP20 that interacts with m7GpppG-capped RNA. Expressed in all tissues analyzed, including roots, stems, leaves and flowers.

It localises to the nucleus. The protein resides in the cytoplasm. In terms of biological role, component of the cap-binding complex (CBC), which binds cotranscriptionally to the 5'-cap of pre-mRNAs and is involved in various processes such as pre-mRNA splicing and RNA-mediated gene silencing (RNAi) by microRNAs (miRNAs). The CBC complex is involved in miRNA-mediated RNA interference and is required for primary miRNA processing. In the CBC complex, ABH1/CBP80 does not bind directly capped RNAs (m7GpppG-capped RNA) but is required to stabilize the movement of the N-terminal loop of CBP20 and lock the CBC into a high affinity cap-binding state with the cap structure. Involved in flowering regulation, possibly by regulating pre-mRNA splicing of FLC gene. Acts as a negative regulator of abscisic acid signaling in guard cells. The protein is Nuclear cap-binding protein subunit 1 (ABH1) of Arabidopsis thaliana (Mouse-ear cress).